The sequence spans 314 residues: Methionyl-tRNA formyltransferase (314 aa).

Residue 113–116 (SLLP) participates in (6S)-5,6,7,8-tetrahydrofolate binding.

The protein belongs to the Fmt family.

It carries out the reaction L-methionyl-tRNA(fMet) + (6R)-10-formyltetrahydrofolate = N-formyl-L-methionyl-tRNA(fMet) + (6S)-5,6,7,8-tetrahydrofolate + H(+). Its function is as follows. Attaches a formyl group to the free amino group of methionyl-tRNA(fMet). The formyl group appears to play a dual role in the initiator identity of N-formylmethionyl-tRNA by promoting its recognition by IF2 and preventing the misappropriation of this tRNA by the elongation apparatus. This chain is Methionyl-tRNA formyltransferase, found in Pseudomonas aeruginosa (strain ATCC 15692 / DSM 22644 / CIP 104116 / JCM 14847 / LMG 12228 / 1C / PRS 101 / PAO1).